The primary structure comprises 345 residues: Ribosomal RNA large subunit methyltransferase F (345 aa).

Over residues 1-14 (MTSKPMTRRPTANN) the composition is skewed to polar residues. 2 disordered regions span residues 1 to 35 (MTSK…RNPH) and 225 to 258 (EANS…NAAQ). Over residues 229 to 239 (RKQHNLQRHRG) the composition is skewed to basic residues. Residues 246–258 (ISRSSTKSGNAAQ) show a composition bias toward polar residues.

Belongs to the methyltransferase superfamily. METTL16/RlmF family.

It localises to the cytoplasm. The enzyme catalyses adenosine(1618) in 23S rRNA + S-adenosyl-L-methionine = N(6)-methyladenosine(1618) in 23S rRNA + S-adenosyl-L-homocysteine + H(+). Functionally, specifically methylates the adenine in position 1618 of 23S rRNA. The polypeptide is Ribosomal RNA large subunit methyltransferase F (Psychrobacter arcticus (strain DSM 17307 / VKM B-2377 / 273-4)).